Reading from the N-terminus, the 156-residue chain is Hemerythrin-like protein (156 aa).

H54, H84, E88, H109, H113, H142, and D147 together coordinate Fe cation.

This sequence belongs to the hemerythrin family.

Oxygen-binding protein. The oxygen-binding site contains two iron atoms. This chain is Hemerythrin-like protein, found in Nematostella vectensis (Starlet sea anemone).